We begin with the raw amino-acid sequence, 716 residues long: MAKQFKRKSNGVSESNRKRGRQELRKVTRTAARKQQQDENHEDDLDVNNDSQEDNSEKEIDEEDEEGERDDNRGKAYSALLTLLKSEHKEKPKNVTSGSSSQVEKANASDSEDDGIAGANVEEEEEGEIDNNVDENEIVSESDVDDDDEDATNRLSTDPFESHFNLPSDDYLAKEEKLVLKDNEKWRTVDKQTYSDLAISSLVQLPPGEPLNPPLLKSSKLSEYTIKKRVLDSYEQAYGTDLSDLESTLINPILNYRDVNFQYKSFKNKFYRRLYTLHALNHIFKTRDRILKNTAKLHAAKEDSEELELRDQGFTRPKVLIMLPTRDACYEVVEQLIKLSGTEQQENKKKFNDQFYVKATPPATKPEDFRDAFKGNNSDFFCIGLKFTRKSLKLYSSFYSSDIILASPIGLSMILENPDKKKRQYDFLSSIEVLIVDKCNQIEMQNWDHVNTVMKYLNKVPKEFHDADFSRIRMWSINDQAKLLRQTLVFCEYLTPSINNLISSKSYNLSGKVKFKPIINSENSMMNSIGLKIKQIFQRFDSQSPLQDPDSRYKYFINAILPSLLKTSSYEDGIMIFIPSYFDYLRVKNYLKTSTKFTFGSIDEYSSQSKLTKTRQEFASGKIKLLLYTERLHYFRRYEISGVKTLIMYGLPSNPLFYKELIRFIGKSVFKEECDLDLALVKILFSKWDAVNLEKIVGNERAPVLCNSMNELYEFR.

The segment at 1-161 is disordered; that stretch reads MAKQFKRKSN…TNRLSTDPFE (161 aa). Over residues 15 to 26 the composition is skewed to basic and acidic residues; that stretch reads SNRKRGRQELRK. Residues 40–69 are compositionally biased toward acidic residues; that stretch reads NHEDDLDVNNDSQEDNSEKEIDEEDEEGER. A compositionally biased stretch (polar residues) spans 94–104; the sequence is NVTSGSSSQVE. The segment covering 110-150 has biased composition (acidic residues); that stretch reads DSEDDGIAGANVEEEEEGEIDNNVDENEIVSESDVDDDDED.

The protein belongs to the UTP25 family. As to quaternary structure, component of the ribosomal small subunit (SSU) processome composed of at least 40 protein subunits and snoRNA U3.

Its subcellular location is the nucleus. The protein resides in the nucleolus. Its function is as follows. DEAD-box RNA helicase-like protein required for pre-18S rRNA processing, specifically at sites A0, A1, and A2. The protein is U3 small nucleolar RNA-associated protein 25 (UTP25) of Candida albicans (strain WO-1) (Yeast).